The primary structure comprises 723 residues: ATP-dependent DNA helicase RRM3 (723 aa).

Disordered stretches follow at residues 1-31 (MFRSHASGNKKQWSKRSSNGSTPAASASGSH) and 61-101 (DLES…DDDP). Phosphoserine is present on S64. Positions 83-96 (NNSSSLFSQSQGSF) are enriched in low complexity. 254–261 (GSAGTGKS) lines the ATP pocket. A DNA-binding region spans residues 682–701 (QVYVALSRAVTMDTLQVLNF).

The protein belongs to the helicase family. Interacts with DEF1 and POL30.

It is found in the nucleus. The protein resides in the chromosome. Its subcellular location is the telomere. The enzyme catalyses Couples ATP hydrolysis with the unwinding of duplex DNA at the replication fork by translocating in the 5'-3' direction. This creates two antiparallel DNA single strands (ssDNA). The leading ssDNA polymer is the template for DNA polymerase III holoenzyme which synthesizes a continuous strand.. The catalysed reaction is ATP + H2O = ADP + phosphate + H(+). Functionally, 5' to 3' DNA replicative helicase recruited to paused replisomes to promote fork progression throughout nonhistone protein-DNA complexes, naturally occurring impediments that are encountered in each S phase where replication forks pauses. Needed for normal fork progression through over 1000 discrete sites scattered throughout the genome, like rDNA, tRNA genes, centromeres, active replication origins, or transcriptional silencers. Required for timely replication of the telomere and subtelomeric DNA and for wild-type levels of telomeric silencing. Involved in regulation of Ty1 transposition and protects the genome from instability at nascent sites of retrotransposition. Involved in DNA repair during stalled replication fork, regulation of fragile sites expression and essential for genome stability. Also plays a role in mtDNA replication. Has G-quadruplex (G4) unwinding activity and can suppress G4-induced genome instability when PIF1 levels are low. This chain is ATP-dependent DNA helicase RRM3, found in Saccharomyces cerevisiae (strain ATCC 204508 / S288c) (Baker's yeast).